Reading from the N-terminus, the 1198-residue chain is Fibronectin type-III domain-containing protein 3a (1198 aa).

Basic and acidic residues predominate over residues 189-201; it reads KLKDRHGTQKDKL. Residues 189–256 are disordered; it reads KLKDRHGTQK…SQTDVEIEEK (68 aa). Residues 229-247 are compositionally biased toward low complexity; that stretch reads GISTGSTKSKSVGKGKSNS. Fibronectin type-III domains are found at residues 269–370, 374–466, 470–563, 567–661, 665–758, 762–852, 864–951, 952–1045, and 1046–1151; these read NIAK…TMSC, APNL…TSGT, TPAS…TCPD, APSK…TPAV, PCQP…TAPG, QCKP…TPAS, SEDE…TKPL, PPDP…TPKS, and VPAA…TEPP. Residues 553-574 are disordered; the sequence is SETVDYTTCPDKPGAPSKPSVK. A helical transmembrane segment spans residues 1172 to 1192; it reads VCAAVILALFAIFSILIAVII.

The protein belongs to the FNDC3 family.

Its subcellular location is the golgi apparatus membrane. The polypeptide is Fibronectin type-III domain-containing protein 3a (FNDC3A) (Gallus gallus (Chicken)).